We begin with the raw amino-acid sequence, 200 residues long: Membrane-spanning 4-domains subfamily A member 5 (200 aa).

Topologically, residues 1 to 52 (MDSSTAHSPVFLVFPPEITASEYESTELSATTFSTQSPLQKLFARKMKILGT) are cytoplasmic. The helical transmembrane segment at 53–73 (IQILFGIMTFSFGVIFLFTLL) threads the bilayer. Residues 74-80 (KPYPRFP) lie on the Extracellular side of the membrane. A helical transmembrane segment spans residues 81 to 101 (FIFLSGYPFWGSVLFINSGAF). Residues 102–120 (LIAVKRKTTETLIILSRIM) are Cytoplasmic-facing. The helical transmembrane segment at 121 to 141 (NFLSALGAIAGIILLTFGFIL) threads the bilayer. Over 142-159 (DQNYICGYSHQNSQCKAV) the chain is Extracellular. A helical membrane pass occupies residues 160–180 (TVLFLGILITLMTFSIIELFI). Residues 181–200 (SLPFSILGCHSEDCDCEQCC) lie on the Cytoplasmic side of the membrane.

The protein belongs to the MS4A family. Expressed at high level in the testis. Detected also in the pancreas, heart and in the brain.

The protein localises to the membrane. Its function is as follows. May be involved in signal transduction as a component of a multimeric receptor complex. In Homo sapiens (Human), this protein is Membrane-spanning 4-domains subfamily A member 5 (MS4A5).